A 178-amino-acid polypeptide reads, in one-letter code: MDSQSPSAGARPITHTTTPPARKLPDIHLDIVLVVFCGGAIGTAIRYAFAQIPAAGSFHTGTFVANMLACFCYAGLTAYLAGASRFGARSKELASRGLGMGVCGGLSTMSTLALEGFTAIRDGQVAAGIAYLLVTFALGLVCASAGVWAGTHLAGSSNVSAEASADTNAATTSKGGKA.

The next 4 helical transmembrane spans lie at 25 to 45 (PDIH…GTAI), 63 to 83 (FVAN…LAGA), 97 to 117 (GLGM…LEGF), and 129 to 149 (IAYL…GVWA). Residues Gly-104 and Ser-107 each coordinate Na(+).

It belongs to the fluoride channel Fluc/FEX (TC 1.A.43) family.

The protein resides in the cell membrane. The catalysed reaction is fluoride(in) = fluoride(out). Na(+) is not transported, but it plays an essential structural role and its presence is essential for fluoride channel function. In terms of biological role, fluoride-specific ion channel. Important for reducing fluoride concentration in the cell, thus reducing its toxicity. The chain is Fluoride-specific ion channel FluC 2 from Bifidobacterium longum (strain NCC 2705).